Here is a 1291-residue protein sequence, read N- to C-terminus: Vigilin 1 (1291 aa).

Over residues 1–39 the composition is skewed to polar residues; that stretch reads MEHLSNLEQPTTMDSYDFQKLTNDENLQGTESQVPSGSK. 2 disordered regions span residues 1–45 and 70–91; these read MEHL…STNG and HENA…KPAI. The span at 73–88 shows a compositional bias: low complexity; sequence AQQGKKQNNSKSFSKK. Ser115 bears the Phosphoserine mark. A disordered region spans residues 124-148; that stretch reads TSVAGSDSVSRDKIPFSASSRASST. 12 KH domains span residues 166-229, 236-328, 339-405, 416-486, 575-644, 658-726, 741-798, 808-883, 894-957, 967-1040, 1050-1114, and 1219-1280; these read ILSP…RRQI, RETK…QKDI, TTVR…ALYL, TIPT…NSTI, SKFY…LADL, IVSE…VSEI, SHVE…AARI, DTIL…KQEL, AYTS…IKEI, LVEK…ETRL, QVEE…KEMI, and NCIA…KDLI. The segment at 266–303 is disordered; the sequence is TSTRIQIPKRNNTANESSDDAKKPEKEENSAASTLDDL. Residues 268-281 show a composition bias toward polar residues; the sequence is TRIQIPKRNNTANE. A compositionally biased stretch (basic and acidic residues) spans 284–294; it reads DDAKKPEKEEN. The interval 845-865 is disordered; that stretch reads PREDDSSNSTGNELMKPTSPD. Residue Ser934 is modified to Phosphoserine. Thr935 carries the post-translational modification Phosphothreonine.

The protein resides in the endoplasmic reticulum. The protein localises to the cytoplasm. Required for cell survival under thermal stress. The chain is Vigilin 1 (vgl1) from Schizosaccharomyces pombe (strain 972 / ATCC 24843) (Fission yeast).